Consider the following 466-residue polypeptide: Ribulose bisphosphate carboxylase large chain (466 aa).

At Lys5 the chain carries N6,N6,N6-trimethyllysine. Positions 114 and 164 each coordinate substrate. Lys166 functions as the Proton acceptor in the catalytic mechanism. Substrate is bound at residue Lys168. Mg(2+) is bound by residues Lys192, Asp194, and Glu195. Lys192 bears the N6-carboxylysine mark. His285 functions as the Proton acceptor in the catalytic mechanism. Arg286, His318, and Ser370 together coordinate substrate.

Belongs to the RuBisCO large chain family. Type I subfamily. Heterohexadecamer of 8 large chains and 8 small chains; disulfide-linked. The disulfide link is formed within the large subunit homodimers. Requires Mg(2+) as cofactor. Post-translationally, the disulfide bond which can form in the large chain dimeric partners within the hexadecamer appears to be associated with oxidative stress and protein turnover.

It localises to the plastid. The protein resides in the chloroplast. The enzyme catalyses 2 (2R)-3-phosphoglycerate + 2 H(+) = D-ribulose 1,5-bisphosphate + CO2 + H2O. The catalysed reaction is D-ribulose 1,5-bisphosphate + O2 = 2-phosphoglycolate + (2R)-3-phosphoglycerate + 2 H(+). Functionally, ruBisCO catalyzes two reactions: the carboxylation of D-ribulose 1,5-bisphosphate, the primary event in carbon dioxide fixation, as well as the oxidative fragmentation of the pentose substrate in the photorespiration process. Both reactions occur simultaneously and in competition at the same active site. The protein is Ribulose bisphosphate carboxylase large chain of Adenium obesum (Desert rose).